The primary structure comprises 89 residues: Small ribosomal subunit protein uS19 (89 aa).

It belongs to the universal ribosomal protein uS19 family.

Protein S19 forms a complex with S13 that binds strongly to the 16S ribosomal RNA. This chain is Small ribosomal subunit protein uS19, found in Xanthomonas campestris pv. campestris (strain 8004).